Here is a 244-residue protein sequence, read N- to C-terminus: Type III pantothenate kinase (244 aa).

6 to 13 (DVGNTRIK) contributes to the ATP binding site. Substrate contacts are provided by residues Tyr-87 and 94 to 97 (GIDR). Residue Asp-96 is the Proton acceptor of the active site. A K(+)-binding site is contributed by Asp-117. Thr-120 is an ATP binding site. Residue Thr-172 coordinates substrate.

It belongs to the type III pantothenate kinase family. Homodimer. Requires NH4(+) as cofactor. K(+) serves as cofactor.

The protein resides in the cytoplasm. The enzyme catalyses (R)-pantothenate + ATP = (R)-4'-phosphopantothenate + ADP + H(+). The protein operates within cofactor biosynthesis; coenzyme A biosynthesis; CoA from (R)-pantothenate: step 1/5. Catalyzes the phosphorylation of pantothenate (Pan), the first step in CoA biosynthesis. This Flavobacterium johnsoniae (strain ATCC 17061 / DSM 2064 / JCM 8514 / BCRC 14874 / CCUG 350202 / NBRC 14942 / NCIMB 11054 / UW101) (Cytophaga johnsonae) protein is Type III pantothenate kinase.